A 385-amino-acid polypeptide reads, in one-letter code: Type III polyketide synthase C (385 aa).

56–63 (KLQHLCKS) lines the CoA pocket. Cysteine 165 acts as the Nucleophile in catalysis. Residue 217–218 (GD) participates in substrate binding. CoA-binding positions include leucine 267, 307 to 310 (GGPA), and alanine 310.

The protein belongs to the thiolase-like superfamily. Chalcone/stilbene synthases family. As to quaternary structure, homodimer.

Its subcellular location is the endoplasmic reticulum. It functions in the pathway secondary metabolite biosynthesis; flavonoid biosynthesis. In terms of biological role, plant type III polyketide synthases (PKSs) that catalyzes the condensation of malonyl-CoA units with various CoA ester starter molecules to generate a diverse array of natural products including long-chain alkyl alpha-pyrones. The chain is Type III polyketide synthase C from Arabidopsis thaliana (Mouse-ear cress).